The sequence spans 226 residues: Triosephosphate isomerase (226 aa).

10–12 (NFK) serves as a coordination point for substrate. The active-site Electrophile is the His-96. Residue Glu-144 is the Proton acceptor of the active site. Substrate-binding positions include Ile-149, Gly-184, and 205–206 (AS).

Belongs to the triosephosphate isomerase family. As to quaternary structure, homotetramer; dimer of dimers.

Its subcellular location is the cytoplasm. It carries out the reaction D-glyceraldehyde 3-phosphate = dihydroxyacetone phosphate. Its pathway is carbohydrate biosynthesis; gluconeogenesis. It functions in the pathway carbohydrate degradation; glycolysis; D-glyceraldehyde 3-phosphate from glycerone phosphate: step 1/1. Its function is as follows. Involved in the gluconeogenesis. Catalyzes stereospecifically the conversion of dihydroxyacetone phosphate (DHAP) to D-glyceraldehyde-3-phosphate (G3P). The protein is Triosephosphate isomerase of Methanopyrus kandleri (strain AV19 / DSM 6324 / JCM 9639 / NBRC 100938).